Reading from the N-terminus, the 365-residue chain is Probable galacturonosyltransferase-like 10 (365 aa).

Residues 1 to 10 (MMSGSRLASR) lie on the Cytoplasmic side of the membrane. A helical; Signal-anchor for type II membrane protein transmembrane segment spans residues 11–31 (LIIIFSIISTSFFTVESIRLF). Residues 32–365 (PDSFDDASSD…LQYNQELEIL (334 aa)) lie on the Lumenal side of the membrane. N-linked (GlcNAc...) asparagine glycosylation is present at Asn-209.

The protein belongs to the glycosyltransferase 8 family.

It localises to the golgi apparatus membrane. Its pathway is glycan metabolism; pectin biosynthesis. Its function is as follows. May be involved in pectin and/or xylans biosynthesis in cell walls. In Arabidopsis thaliana (Mouse-ear cress), this protein is Probable galacturonosyltransferase-like 10 (GATL10).